A 392-amino-acid polypeptide reads, in one-letter code: 8-amino-7-oxononanoate synthase (392 aa).

R21 lines the substrate pocket. 114–115 (GY) is a binding site for pyridoxal 5'-phosphate. H139 lines the substrate pocket. Pyridoxal 5'-phosphate is bound by residues S187, 212–215 (DEAH), and 243–246 (TFGK). Residue K246 is modified to N6-(pyridoxal phosphate)lysine. Residue T359 coordinates substrate.

It belongs to the class-II pyridoxal-phosphate-dependent aminotransferase family. BioF subfamily. Homodimer. It depends on pyridoxal 5'-phosphate as a cofactor.

The enzyme catalyses 6-carboxyhexanoyl-[ACP] + L-alanine + H(+) = (8S)-8-amino-7-oxononanoate + holo-[ACP] + CO2. Its pathway is cofactor biosynthesis; biotin biosynthesis. Its function is as follows. Catalyzes the decarboxylative condensation of pimeloyl-[acyl-carrier protein] and L-alanine to produce 8-amino-7-oxononanoate (AON), [acyl-carrier protein], and carbon dioxide. In Chlorobaculum parvum (strain DSM 263 / NCIMB 8327) (Chlorobium vibrioforme subsp. thiosulfatophilum), this protein is 8-amino-7-oxononanoate synthase.